The following is a 407-amino-acid chain: Protein COS9 (407 aa).

A run of 3 helical transmembrane segments spans residues 75–95 (TWLL…IKSI), 98–118 (IFPF…LPNI), and 261–281 (IFNL…YVSW).

The protein belongs to the DUP/COS family.

It localises to the membrane. This chain is Protein COS9 (COS9), found in Saccharomyces cerevisiae (strain ATCC 204508 / S288c) (Baker's yeast).